A 95-amino-acid polypeptide reads, in one-letter code: Endoribonuclease VapD homolog (95 aa).

This sequence belongs to the VapD ribonuclease family. Homodimer.

Functionally, cleaves ssRNA, mostly between U:A. This is Endoribonuclease VapD homolog from Helicobacter pylori (strain ATCC 700392 / 26695) (Campylobacter pylori).